Consider the following 136-residue polypeptide: ATP synthase epsilon chain, plastid (136 aa).

It belongs to the ATPase epsilon chain family. In terms of assembly, F-type ATPases have 2 components, CF(1) - the catalytic core - and CF(0) - the membrane proton channel. CF(1) has five subunits: alpha(3), beta(3), gamma(1), delta(1), epsilon(1). CF(0) has three main subunits: a, b and c.

It localises to the plastid thylakoid membrane. Produces ATP from ADP in the presence of a proton gradient across the membrane. The polypeptide is ATP synthase epsilon chain, plastid (Cuscuta reflexa (Southern Asian dodder)).